The following is a 303-amino-acid chain: Short chain dehydrogenase pigC (303 aa).

The NADP(+) site is built by Ile-45, Asp-103, Asn-130, Arg-164, Tyr-196, Lys-200, and Thr-231. Residue Tyr-196 is the Proton donor of the active site. The active-site Lowers pKa of active site Tyr is the Lys-200.

Belongs to the short-chain dehydrogenases/reductases (SDR) family.

It functions in the pathway secondary metabolite biosynthesis. Short chain dehydrogenase; part of the gene cluster that mediates the biosynthesis of azaphilone pigments (MonAzPs), a complex mixture of compounds with a common azaphilone skeleton very widely used as food colorants. Within the pathway, pigC intercepts the very reactive benzaldehyde produced by the nrPKS pigA to reduce the omega-1 carbonyl to the alcohol to provide the first stable enzyme-free MonAzPs intermediate, 6-(4-hydroxy-2-oxopentyl)-3-methyl-2,4-dioxocyclohexane carbaldehyde, also known as M7PKS-1. The first step of the pathway is performed by the nrPKS pigA that forms the hexaketide precursor from successive condensations of five malonyl-CoA units, with a simple acetyl-CoA starter unit. The role of esterase pigG is not clear, but it may play at most a supplementary role in the formation of the benzaldehyde produced by the pigA nrPKS. This very reactive benzaldehyde is intercepted by the pigC ketoreductase that to provide the first stable enzyme-free MonAzPs intermediate, M7PKS-1. The FAD-dependent monooxygenase pigN hydroxylates M7PKS-1 at C-4, which triggers the formation of the pyran ring. PigJ, pigK and pigD are involved in the acetylation of the pyran ring. PigJ and pigK form the two subunits of a dedicated fungal FAS that produces the side chain fatty acyl moiety of MonAzPs and pigD transfers the fatty acyl chain to the C-4 alcohol. PigM and pigO are involved in the elimination of the omega-1 alcohol. PigM acts as an O-acetyltransferase that synthesizes the putative O-11 acetyl intermediate whereas pigO eliminates acetic acid to yield an intermediate with a C10(11) double bond. The dehydration of the C-11 alcohol followed by the reduction of the C6(7) double bond by the NAD(P)H-dependent oxidoreductase pigE increases the electrophilicity of the C-5 ketone of the resulting acyl benzopyran. This in turn sets up the C-5 ketone for an intramolecular Knoevenagel aldol condensation with the C-20 enol of the side chain. This condensation affords the characteristic linear tricyclic carbon skeletons of the yellow pigments that serve as the common precursors for the classical yellow pigments monascin and ankaflavin, orange pigments rubopunctatin and monascorubrin, and red pigments ribropunctamine and monascorubramine. The FAD-dependent oxidoreductase pigF is especially invoved in the biosynthesis of orange and red pigments via desaturation of C6(7). This is Short chain dehydrogenase pigC from Monascus ruber (Mold).